The following is a 96-amino-acid chain: UPF0235 protein Shewmr4_1190 (96 aa).

Belongs to the UPF0235 family.

This chain is UPF0235 protein Shewmr4_1190, found in Shewanella sp. (strain MR-4).